The primary structure comprises 527 residues: Catalase (527 aa).

The segment covering 1 to 22 has biased composition (basic and acidic residues); sequence MADSRDPASDQMKLWKEQRAAQ. The segment at 1-34 is disordered; the sequence is MADSRDPASDQMKLWKEQRAAQKPDVLTTGGGNP. The residue at position 2 (Ala-2) is an N-acetylalanine. Position 9 is a phosphoserine (Ser-9). Lys-13 carries the post-translational modification N6-succinyllysine. Residues His-75 and Asn-148 contribute to the active site. His-194, Ser-201, Arg-203, and Asn-213 together coordinate NADP(+). Lys-221 bears the N6-succinyllysine mark. Lys-233 carries the post-translational modification N6-acetyllysine. 3 residues coordinate NADP(+): Lys-237, Trp-303, and His-305. Tyr-358 lines the heme pocket. Phosphoserine is present on residues Ser-422 and Ser-434. N6-acetyllysine; alternate occurs at positions 449 and 480. Lys-449 and Lys-480 each carry N6-succinyllysine; alternate. Position 499 is an N6-acetyllysine (Lys-499). Position 511 is a phosphothreonine (Thr-511). Position 517 is a phosphoserine (Ser-517). The short motif at 524-527 is the Microbody targeting signal; atypical element; it reads KANL.

It belongs to the catalase family. As to quaternary structure, homotetramer. Interacts (via microbody targeting signal) with PEX5, monomeric form interacts with PEX5, leading to its translocation into peroxisomes. It depends on heme as a cofactor. NADP(+) is required as a cofactor.

It localises to the peroxisome matrix. The enzyme catalyses 2 H2O2 = O2 + 2 H2O. Its function is as follows. Catalyzes the degradation of hydrogen peroxide (H(2)O(2)) generated by peroxisomal oxidases to water and oxygen, thereby protecting cells from the toxic effects of hydrogen peroxide. Promotes growth of cells including T-cells, B-cells, myeloid leukemia cells, melanoma cells, mastocytoma cells and normal and transformed fibroblast cells. This Canis lupus familiaris (Dog) protein is Catalase (CAT).